A 591-amino-acid polypeptide reads, in one-letter code: Probable auxin efflux carrier component 3b (591 aa).

The Extracellular segment spans residues 1-6 (MISWHE). A helical transmembrane segment spans residues 7-27 (LYMVLSAVVPLYVAMMVAYGS). The Cytoplasmic segment spans residues 28–38 (VRWWGVLTPEQ). The helical transmembrane segment at 39 to 59 (CSGINRFVAVIAVPLLSFHFI) threads the bilayer. Val-51 is a (indol-3-yl)acetate binding site. Residues 60-70 (SSSDPYAMNLR) lie on the Extracellular side of the membrane. A helical membrane pass occupies residues 71 to 93 (FVAADTLQKVLVLAALAAWSRFP). The Cytoplasmic segment spans residues 94–107 (ARFVPPAWPPLDCS). A helical transmembrane segment spans residues 108 to 128 (ITLFSVSTLPNTLVMGIPLLV). (indol-3-yl)acetate is bound by residues Asn-118 and Leu-120. The Extracellular segment spans residues 129–137 (SMYGPYSGD). A helical membrane pass occupies residues 138-158 (LMVQIVVLQSIVWYTLLLFLF). Residue Tyr-151 coordinates (indol-3-yl)acetate. Residues 159-450 (EFRAARVLIA…LIRNPNTYAS (292 aa)) lie on the Cytoplasmic side of the membrane. Composition is skewed to polar residues over residues 243–254 (SRNATPRGSTFT) and 283–292 (SSSRQHTPRP). 4 disordered regions span residues 243–269 (SRNATPRGSTFTLADIPGHQPPNSALR), 283–313 (SSSRQHTPRPSSFDEHAAARARASATVAPTN), 344–374 (ETRRLVPSDAPSIASSRVIRPPPGATGGERA), and 392–420 (AGAKTEQQTTAVTTTTKGGGAAGAERARG). Over residues 395–407 (KTEQQTTAVTTTT) the composition is skewed to low complexity. A helical transmembrane segment spans residues 451–471 (LIGLTWSLIAFRFHITMPIIV). The Extracellular segment spans residues 472 to 474 (AKS). Residues 475–495 (ISILSDAGLGMAMFSLGLFMA) traverse the membrane as a helical segment. The Cytoplasmic portion of the chain corresponds to 496–511 (TQPKIIACGYSVAAAS). A helical membrane pass occupies residues 512–532 (MGVRFFFGPAIMAAASAAVGI). The Extracellular portion of the chain corresponds to 533 to 535 (RGT). The helical transmembrane segment at 536–556 (LLRIAIVQAALPQGIVPFVFA) threads the bilayer. Residues Ile-550 and Val-551 each coordinate (indol-3-yl)acetate. Topologically, residues 557-568 (KEYNLHATILCT) are cytoplasmic. Residues 569 to 589 (LVIFGMLIALPITLVYYIILG) traverse the membrane as a helical segment. Residues 590 to 591 (LL) lie on the Extracellular side of the membrane.

Belongs to the auxin efflux carrier (TC 2.A.69.1) family. Homodimer. Expressed in stem bases and leaves.

The protein resides in the membrane. In terms of biological role, may act as a component of the auxin efflux carrier. This is Probable auxin efflux carrier component 3b from Oryza sativa subsp. japonica (Rice).